Here is a 428-residue protein sequence, read N- to C-terminus: Enolase (428 aa).

Q163 contacts (2R)-2-phosphoglycerate. E205 serves as the catalytic Proton donor. Positions 242, 286, and 313 each coordinate Mg(2+). Residues K338, R367, S368, and K389 each contribute to the (2R)-2-phosphoglycerate site. K338 functions as the Proton acceptor in the catalytic mechanism.

This sequence belongs to the enolase family. The cofactor is Mg(2+).

It is found in the cytoplasm. It localises to the secreted. Its subcellular location is the cell surface. It catalyses the reaction (2R)-2-phosphoglycerate = phosphoenolpyruvate + H2O. It participates in carbohydrate degradation; glycolysis; pyruvate from D-glyceraldehyde 3-phosphate: step 4/5. In terms of biological role, catalyzes the reversible conversion of 2-phosphoglycerate (2-PG) into phosphoenolpyruvate (PEP). It is essential for the degradation of carbohydrates via glycolysis. The protein is Enolase of Acidovorax sp. (strain JS42).